The primary structure comprises 185 residues: MIDEALFEAEEKMEKAVTVAKDDLGSVRTGRANPGMFSRIVIDYYGSITPITQLASINVPEARMVIVKPYEASQLNAIETAIRNSDLGVNPSNDGSIIRISVPQLTEERRRELVKQAKSKGEDSKVTLRNIRRKAMDELGRIQKDGEAGEDEVGRAEKELDKTTAKYVHTVEELVKHKEAELMEV.

It belongs to the RRF family.

The protein resides in the cytoplasm. Responsible for the release of ribosomes from messenger RNA at the termination of protein biosynthesis. May increase the efficiency of translation by recycling ribosomes from one round of translation to another. The polypeptide is Ribosome-recycling factor (Rhodococcus erythropolis (strain PR4 / NBRC 100887)).